The chain runs to 289 residues: ATP synthase subunit a (289 aa).

The next 7 helical transmembrane spans lie at 41–61 (KATA…WLGF), 101–121 (YLLV…IPAA), 129–149 (IAVP…AGIK), 166–186 (TAPL…TLIV), 189–209 (FTLA…LLVF), 222–242 (FVFG…ELVI), and 244–264 (ALQA…AMAH).

It belongs to the ATPase A chain family. In terms of assembly, F-type ATPases have 2 components, CF(1) - the catalytic core - and CF(0) - the membrane proton channel. CF(1) has five subunits: alpha(3), beta(3), gamma(1), delta(1), epsilon(1). CF(0) has three main subunits: a(1), b(2) and c(9-12). The alpha and beta chains form an alternating ring which encloses part of the gamma chain. CF(1) is attached to CF(0) by a central stalk formed by the gamma and epsilon chains, while a peripheral stalk is formed by the delta and b chains.

It is found in the cell membrane. In terms of biological role, key component of the proton channel; it plays a direct role in the translocation of protons across the membrane. This chain is ATP synthase subunit a, found in Frankia alni (strain DSM 45986 / CECT 9034 / ACN14a).